The following is a 389-amino-acid chain: S-adenosylmethionine synthase (389 aa).

Residue His-15 participates in ATP binding. Asp-17 is a binding site for Mg(2+). A K(+)-binding site is contributed by Glu-43. L-methionine is bound by residues Glu-56 and Gln-99. Residues 99 to 109 (QSPDIAQGVNE) are flexible loop. ATP-binding positions include 166-168 (DAK), 234-235 (RF), Asp-243, 249-250 (RK), Ala-266, and Lys-270. Position 243 (Asp-243) interacts with L-methionine. Residue Lys-274 participates in L-methionine binding.

Belongs to the AdoMet synthase family. Homotetramer; dimer of dimers. Mg(2+) serves as cofactor. Requires K(+) as cofactor.

It localises to the cytoplasm. The enzyme catalyses L-methionine + ATP + H2O = S-adenosyl-L-methionine + phosphate + diphosphate. Its pathway is amino-acid biosynthesis; S-adenosyl-L-methionine biosynthesis; S-adenosyl-L-methionine from L-methionine: step 1/1. In terms of biological role, catalyzes the formation of S-adenosylmethionine (AdoMet) from methionine and ATP. The overall synthetic reaction is composed of two sequential steps, AdoMet formation and the subsequent tripolyphosphate hydrolysis which occurs prior to release of AdoMet from the enzyme. The sequence is that of S-adenosylmethionine synthase from Neisseria gonorrhoeae (strain ATCC 700825 / FA 1090).